A 243-amino-acid polypeptide reads, in one-letter code: Probable 2-phosphosulfolactate phosphatase (243 aa).

It belongs to the ComB family. Mg(2+) is required as a cofactor.

It catalyses the reaction (2R)-O-phospho-3-sulfolactate + H2O = (2R)-3-sulfolactate + phosphate. The chain is Probable 2-phosphosulfolactate phosphatase from Prochlorococcus marinus (strain MIT 9303).